We begin with the raw amino-acid sequence, 144 residues long: Maximins 2/H8 type 2 (144 aa).

An N-terminal signal peptide occupies residues 1–18 (MNFKYIVAVSFLIASAYA). A propeptide spanning residues 19-43 (RSEENEIQSLSQRDVLEEESLREIR) is cleaved from the precursor. N70 bears the Asparagine amide mark. Residues 74 to 123 (TAEEHEVMKRLETVMRDLDSLDYPEEASERETRGFNQEEIANLFTKKEKR) constitute a propeptide that is removed on maturation. I143 is subject to Isoleucine amide.

The protein belongs to the bombinin family. As to expression, expressed by the skin glands.

It localises to the secreted. Maximin-2 shows antibacterial activity against both Gram-positive and Gram-negative bacteria. It also shows antimicrobial activity against the fungus C.albicans, but not against A.flavus nor P.uticale. It has little hemolytic activity. In terms of biological role, maximin-H8 shows antimicrobial activity against bacteria and against the fungus C.albicans. Shows strong hemolytic activity. The chain is Maximins 2/H8 type 2 from Bombina maxima (Giant fire-bellied toad).